A 98-amino-acid chain; its full sequence is MAPINLNLILAFSLALLGVLIYRTHLMSTLLCLEGMMLSLFILMTLLISHFHMYSMSMAPLILLVFSACEAGVGLALLVKISTSHGNDYVQNLNLLQC.

3 helical membrane-spanning segments follow: residues Met1 to Ile21, Ser28 to Ile48, and Ala59 to Val79.

It belongs to the complex I subunit 4L family. In terms of assembly, core subunit of respiratory chain NADH dehydrogenase (Complex I) which is composed of 45 different subunits.

The protein localises to the mitochondrion inner membrane. It carries out the reaction a ubiquinone + NADH + 5 H(+)(in) = a ubiquinol + NAD(+) + 4 H(+)(out). Its function is as follows. Core subunit of the mitochondrial membrane respiratory chain NADH dehydrogenase (Complex I) which catalyzes electron transfer from NADH through the respiratory chain, using ubiquinone as an electron acceptor. Part of the enzyme membrane arm which is embedded in the lipid bilayer and involved in proton translocation. This Isoodon macrourus (Short-nosed bandicoot) protein is NADH-ubiquinone oxidoreductase chain 4L (MT-ND4L).